Here is a 579-residue protein sequence, read N- to C-terminus: Threonylcarbamoyladenosine tRNA methylthiotransferase (579 aa).

A Phosphoserine modification is found at serine 53. Residues 64-172 (QKIWIRTWGC…VVEVVEETIK (109 aa)) enclose the MTTase N-terminal domain. Cysteine 73 and cysteine 109 together coordinate [4Fe-4S] cluster. Serine 122 carries the phosphoserine modification. [4Fe-4S] cluster-binding residues include cysteine 138, cysteine 214, cysteine 218, and cysteine 221. One can recognise a Radical SAM core domain in the interval 200 to 431 (RKNPLIEIIS…RVFHSYSPYD (232 aa)). Residues 431–493 (DHKIGERQQV…KHFMKGQPVS (63 aa)) enclose the TRAM domain. Position 499 is a phosphothreonine (threonine 499). The chain crosses the membrane as a helical span at residues 556-578 (CALRMSVGLALLGLLFAFFVKVY).

The protein belongs to the methylthiotransferase family. CDKAL1 subfamily. Requires [4Fe-4S] cluster as cofactor. As to expression, expressed in pancreatic islets.

The protein localises to the endoplasmic reticulum membrane. It catalyses the reaction N(6)-L-threonylcarbamoyladenosine(37) in tRNA + (sulfur carrier)-SH + AH2 + 2 S-adenosyl-L-methionine = 2-methylsulfanyl-N(6)-L-threonylcarbamoyladenosine(37) in tRNA + (sulfur carrier)-H + 5'-deoxyadenosine + L-methionine + A + S-adenosyl-L-homocysteine + 2 H(+). Its function is as follows. Catalyzes the methylthiolation of N6-threonylcarbamoyladenosine (t(6)A), leading to the formation of 2-methylthio-N6-threonylcarbamoyladenosine (ms(2)t(6)A) at position 37 in tRNAs that read codons beginning with adenine. The sequence is that of Threonylcarbamoyladenosine tRNA methylthiotransferase (CDKAL1) from Homo sapiens (Human).